The following is a 443-amino-acid chain: Glucose-6-phosphate isomerase (443 aa).

The Proton donor role is filled by Glu285. Active-site residues include His306 and Lys420.

This sequence belongs to the GPI family.

It is found in the cytoplasm. It catalyses the reaction alpha-D-glucose 6-phosphate = beta-D-fructose 6-phosphate. The protein operates within carbohydrate biosynthesis; gluconeogenesis. It participates in carbohydrate degradation; glycolysis; D-glyceraldehyde 3-phosphate and glycerone phosphate from D-glucose: step 2/4. Catalyzes the reversible isomerization of glucose-6-phosphate to fructose-6-phosphate. This is Glucose-6-phosphate isomerase from Staphylococcus epidermidis (strain ATCC 12228 / FDA PCI 1200).